A 660-amino-acid chain; its full sequence is Acetyl-coenzyme A synthetase (660 aa).

CoA contacts are provided by residues Arg-197–Lys-200 and Thr-317. Residues Gly-397–Pro-399, Asp-421–Thr-426, Asp-512, and Arg-528 each bind ATP. CoA is bound at residue Ser-536. Arg-539 provides a ligand contact to ATP. 2 residues coordinate Mg(2+): Val-550 and Val-555. At Lys-625 the chain carries N6-acetyllysine.

The protein belongs to the ATP-dependent AMP-binding enzyme family. Mg(2+) is required as a cofactor. Post-translationally, acetylated. Deacetylation by the SIR2-homolog deacetylase activates the enzyme.

The enzyme catalyses acetate + ATP + CoA = acetyl-CoA + AMP + diphosphate. In terms of biological role, catalyzes the conversion of acetate into acetyl-CoA (AcCoA), an essential intermediate at the junction of anabolic and catabolic pathways. AcsA undergoes a two-step reaction. In the first half reaction, AcsA combines acetate with ATP to form acetyl-adenylate (AcAMP) intermediate. In the second half reaction, it can then transfer the acetyl group from AcAMP to the sulfhydryl group of CoA, forming the product AcCoA. This chain is Acetyl-coenzyme A synthetase, found in Cupriavidus pinatubonensis (strain JMP 134 / LMG 1197) (Cupriavidus necator (strain JMP 134)).